The chain runs to 189 residues: MAAKFVVVLAACVALSHSAMVRRDAPAGGNAFEEMEKHAKEFQKTFSEQFNSLVNSKNTQDFNKALKDGSDSVLQQLSAFSSSLQGAISDANGKAKEALEQARQNVEKTAEELRKAHPDVEKEANAFKDKLQAAVQTTVQESQKLAKEVASNMEETNKKLAPKIKQAYDDFVKHAEEVQKKLHEAATKQ.

An N-terminal signal peptide occupies residues M1 to S18. Residues A19 to R23 constitute a propeptide that is removed on maturation.

This sequence belongs to the insect apolipophorin-3 family. Equilibrium between a soluble monomer and a bound lipoprotein form. Apolipophorin-3 associates with lipophorin during lipid loading until each particle contains 9 or 14 molecules of apolipophorin-3. Hemolymph.

The protein localises to the secreted. In terms of biological role, assists in the loading of diacylglycerol, generated from triacylglycerol stores in the fat body through the action of adipokinetic hormone, into lipophorin, the hemolymph lipoprotein. It increases the lipid carrying capacity of lipophorin by covering the expanding hydrophobic surface resulting from diacylglycerol uptake. It thus plays a critical role in the transport of lipids during flight in several species of insects. This Manduca sexta (Tobacco hawkmoth) protein is Apolipophorin-3.